The following is a 215-amino-acid chain: Adenylate kinase (215 aa).

10–15 (GAGKGT) provides a ligand contact to ATP. The segment at 30–59 (STGDMLRAAVKAGSPLGQQVKGVMDSGGLV) is NMP. AMP is bound by residues Thr31, Arg36, 57–59 (GLV), 85–88 (GFPR), and Gln92. The segment at 122–159 (GRRVHPASGRVYHTEHNPPKVAGKDDVTGEELIQREDD) is LID. ATP is bound by residues Arg123 and 132–133 (VY). AMP contacts are provided by Arg156 and Arg167. Gly201 is an ATP binding site.

Belongs to the adenylate kinase family. In terms of assembly, monomer.

It localises to the cytoplasm. The enzyme catalyses AMP + ATP = 2 ADP. It participates in purine metabolism; AMP biosynthesis via salvage pathway; AMP from ADP: step 1/1. Catalyzes the reversible transfer of the terminal phosphate group between ATP and AMP. Plays an important role in cellular energy homeostasis and in adenine nucleotide metabolism. The polypeptide is Adenylate kinase (Pseudomonas aeruginosa (strain LESB58)).